The following is a 476-amino-acid chain: Zinc metalloproteinase/disintegrin (476 aa).

Residues 1-20 form the signal peptide; that stretch reads MIQVLLVTICLAAFPYQGSS. Positions 21–192 are excised as a propeptide; sequence IILESGNVND…ASQSNLTPEQ (172 aa). Position 193 is a pyrrolidone carboxylic acid (glutamine 193). The region spanning 198–393 is the Peptidase M12B domain; the sequence is RYIELAVVAD…HNPQCILNKP (196 aa). Ca(2+)-binding residues include glutamate 201 and aspartate 285. 3 disulfides stabilise this stretch: cysteine 309–cysteine 388, cysteine 348–cysteine 372, and cysteine 350–cysteine 355. Zn(2+) is bound at residue histidine 334. Glutamate 335 is an active-site residue. Residues histidine 338 and histidine 344 each contribute to the Zn(2+) site. Ca(2+) contacts are provided by cysteine 388 and asparagine 391. Residues 394–403 constitute a propeptide that is removed on maturation; it reads LTTVSGNELL. A Disintegrin domain is found at 395 to 476; it reads TTVSGNELLE…ADCPRNRFHA (82 aa). Intrachain disulfides connect cysteine 409/cysteine 424, cysteine 411/cysteine 419, cysteine 418/cysteine 441, cysteine 432/cysteine 438, cysteine 437/cysteine 462, and cysteine 450/cysteine 469. Residues 454–456 carry the Cell attachment site motif; sequence RGD.

It belongs to the venom metalloproteinase (M12B) family. P-II subfamily. P-IIa sub-subfamily. As to quaternary structure, monomer (metalloprotease). The cofactor is Zn(2+). Post-translationally, the N-terminus is blocked. In terms of processing, not glycosylated. Expressed by the venom gland.

It localises to the secreted. With respect to regulation, inhibited by EDTA, and 1,10-phenanthroline, but not by PMSF. Functionally, non-hemorrhagic proteinase that activates prothrombin (F2) calcium-independently. Activates factor X (F10) and hydrolyzes the Aalpha-chain and more slowly the Bbeta-chain of fibrin and fibrinogen without affecting the gamma chain. It induces neither detachment nor apoptosis of human endothelial cells and is also not able to trigger an endothelial pro-inflammatory cell response. Nitric oxide and prostacyclin levels released by endothelial cells are significantly increased after treatment with insularinase A. Inhibits ADP-induced platelet aggregation (IC(50)=0.8 uM for native protein). Interestingly, inhibits the adhesion of HUVECs to immobilized fibrinogen at very low concentrations (IC(50)=36 nM). The chain is Zinc metalloproteinase/disintegrin from Bothrops insularis (Golden lancehead).